We begin with the raw amino-acid sequence, 43 residues long: Protein PsbN (43 aa).

The helical transmembrane segment at 7–27 (LVVAIAAITICITAFAIYTAF) threads the bilayer.

The protein belongs to the PsbN family.

It is found in the cellular thylakoid membrane. May play a role in photosystem I and II biogenesis. In Synechococcus sp. (strain JA-3-3Ab) (Cyanobacteria bacterium Yellowstone A-Prime), this protein is Protein PsbN.